A 477-amino-acid chain; its full sequence is Ribulose bisphosphate carboxylase large chain (477 aa).

Positions 1–2 (MS) are excised as a propeptide. P3 bears the N-acetylproline mark. K14 is modified (N6,N6,N6-trimethyllysine). Residues N123 and T173 each contribute to the substrate site. The active-site Proton acceptor is the K175. K177 serves as a coordination point for substrate. Mg(2+) is bound by residues K201, D203, and E204. Position 201 is an N6-carboxylysine (K201). H294 serves as the catalytic Proton acceptor. R295, H327, and S379 together coordinate substrate.

Belongs to the RuBisCO large chain family. Type I subfamily. In terms of assembly, heterohexadecamer of 8 large chains and 8 small chains; disulfide-linked. The disulfide link is formed within the large subunit homodimers. Requires Mg(2+) as cofactor. Post-translationally, the disulfide bond which can form in the large chain dimeric partners within the hexadecamer appears to be associated with oxidative stress and protein turnover.

The protein resides in the plastid. It localises to the chloroplast. The catalysed reaction is 2 (2R)-3-phosphoglycerate + 2 H(+) = D-ribulose 1,5-bisphosphate + CO2 + H2O. It carries out the reaction D-ribulose 1,5-bisphosphate + O2 = 2-phosphoglycolate + (2R)-3-phosphoglycerate + 2 H(+). Functionally, ruBisCO catalyzes two reactions: the carboxylation of D-ribulose 1,5-bisphosphate, the primary event in carbon dioxide fixation, as well as the oxidative fragmentation of the pentose substrate in the photorespiration process. Both reactions occur simultaneously and in competition at the same active site. The protein is Ribulose bisphosphate carboxylase large chain of Solanum bulbocastanum (Wild potato).